Consider the following 223-residue polypeptide: Deoxyribose-phosphate aldolase (223 aa).

The Proton donor/acceptor role is filled by aspartate 92. Lysine 158 serves as the catalytic Schiff-base intermediate with acetaldehyde. Lysine 188 serves as the catalytic Proton donor/acceptor.

It belongs to the DeoC/FbaB aldolase family. DeoC type 1 subfamily.

It is found in the cytoplasm. The enzyme catalyses 2-deoxy-D-ribose 5-phosphate = D-glyceraldehyde 3-phosphate + acetaldehyde. It participates in carbohydrate degradation; 2-deoxy-D-ribose 1-phosphate degradation; D-glyceraldehyde 3-phosphate and acetaldehyde from 2-deoxy-alpha-D-ribose 1-phosphate: step 2/2. In terms of biological role, catalyzes a reversible aldol reaction between acetaldehyde and D-glyceraldehyde 3-phosphate to generate 2-deoxy-D-ribose 5-phosphate. The chain is Deoxyribose-phosphate aldolase from Mycolicibacterium paratuberculosis (strain ATCC BAA-968 / K-10) (Mycobacterium paratuberculosis).